The sequence spans 523 residues: MLFAKAFQSATVAGAVILAALVDVAHSTPLDDPGQCGLEAVAQCCTSLRESAVGDKVFAYGDIEYFRAKRSYYSVTTSLNSACIVLPESAEDVSTVLTTLTQPDLAETCPFAIRSGGHSMVVGFSDIAAGVTLDLSKLNHTIYHPETETVSLGPGGRWVNVYEELRPDNVMVSGGRFSSVGVGGFLTGGGITIYSAQRGLACDDVVSFDVVLANGTLIQATNATNPDLFHTLKGGSGNLGVVTNFEVRAFPQTQIWGGYTSYNVSKTPELARTLQNFTSNIEQDPKALLVTFWTYDTLTDVNRAANAMYYTDPVEYPEAFNDYYAIENISSTVHTRSIESLVTELEDTTNWFRVLFVTLAFKNDARVIEHGANLYQEYIDTIKANVSGGDWLVIAGFQPMPTLFGTSGQENGGNIIGLENNGDKIVLLFEAFWERTQDDELFEPLADELIHNLEEYARSLEQDSDFLYLNYADGWQDPISGYGGDNIEQLRAAAEKYDPNGVFQTQVPGGFKISKVPVAEQKK.

An FAD-binding PCMH-type domain is found at 77–252 (TSLNSACIVL…TNFEVRAFPQ (176 aa)).

The protein belongs to the oxygen-dependent FAD-linked oxidoreductase family. FAD is required as a cofactor.

It participates in secondary metabolite biosynthesis; terpenoid biosynthesis. Functionally, FAD-dependent monooxygenase; part of the gene cluster that mediates the biosynthesis of various drimane-type sesquiterpene esters, compounds that exhibit diverse biological activities and are widely present in eukaryotes. The pathway begins with the synthesis of the backbone drimenol by the terpene cyclase drtB using farnesyl pyrophosphate (FPP) as substrate. The cytochrome P450 monooxygenase drtD is then responsible for the hydroxylations at C-6, C-9 and C-12, as well as the oxidation of hydroxyl groups at C-6 and C-11 to a ketone and an aldehyde, respectively. Then, the biosynthesis can go in two directions, either the hydroxylated drimenol is further hydroxylated at C-2 and C-3 by an enzyme(s) not associated with the drt cluster, or the FAD-binding oxidoreductase drtC further oxidizes C-11 or C-12 to form the butyrolactone ring. DrtB, drtD and drtC are solely responsible for the formation of the different drimane structures observed during drimane sesquiterpenes biosynthesis. The polyketide synthase drtA synthesizes different lengths (C6 and C8) of PKS chains, which are then oxidized to varying degrees by the short-chain dehydrogenase drtF. Finally, these PKS chains are transferred onto drimane sesquiterpenes by the acyltransferase drtE, forming the sesquiterpene esters. In addition to the different fatty acyl-CoA chains produced by drtA, drtE is also able to use cinnamoyl-CoA as a substrate. In Aspergillus calidoustus, this protein is FAD-dependent monooxygenase drtC.